A 103-amino-acid polypeptide reads, in one-letter code: uncharacterized protein (103 aa).

This is an uncharacterized protein from Sinorhizobium fredii (strain NBRC 101917 / NGR234).